A 346-amino-acid chain; its full sequence is Small ribosomal subunit biogenesis GTPase RsgA 2 (346 aa).

In terms of domain architecture, CP-type G spans 93-248; sequence EEQLIAANFD…VIDTPGMREF (156 aa). Residues 138 to 141 and 190 to 198 each bind GTP; these read TKAD and GSSGVGKSS. Zn(2+) is bound by residues Cys271, Cys276, His278, and Cys284.

Belongs to the TRAFAC class YlqF/YawG GTPase family. RsgA subfamily. Monomer. Associates with 30S ribosomal subunit, binds 16S rRNA. Zn(2+) is required as a cofactor.

The protein localises to the cytoplasm. In terms of biological role, one of several proteins that assist in the late maturation steps of the functional core of the 30S ribosomal subunit. Helps release RbfA from mature subunits. May play a role in the assembly of ribosomal proteins into the subunit. Circularly permuted GTPase that catalyzes slow GTP hydrolysis, GTPase activity is stimulated by the 30S ribosomal subunit. This is Small ribosomal subunit biogenesis GTPase RsgA 2 from Listeria monocytogenes serotype 4b (strain F2365).